An 86-amino-acid chain; its full sequence is Large ribosomal subunit protein bL31 (86 aa).

Residues 65 to 86 (YRMASSDSSEQKDKSSEEKKES) form a disordered region. The segment covering 73–86 (SEQKDKSSEEKKES) has biased composition (basic and acidic residues).

This sequence belongs to the bacterial ribosomal protein bL31 family. Type A subfamily. In terms of assembly, part of the 50S ribosomal subunit.

Its function is as follows. Binds the 23S rRNA. This Prochlorococcus marinus (strain NATL1A) protein is Large ribosomal subunit protein bL31.